The sequence spans 77 residues: Sec-independent protein translocase protein TatA (77 aa).

A helical transmembrane segment spans residues 1–21 (MGSFSIWHWLVVGILVLLLFG). Positions 41 to 77 (KGMSEDDAPTPAPKQIDAQRAPDLSATPTPTAETENR) are disordered. Polar residues predominate over residues 66–77 (ATPTPTAETENR).

Belongs to the TatA/E family. The Tat system comprises two distinct complexes: a TatABC complex, containing multiple copies of TatA, TatB and TatC subunits, and a separate TatA complex, containing only TatA subunits. Substrates initially bind to the TatABC complex, which probably triggers association of the separate TatA complex to form the active translocon.

It is found in the cell inner membrane. In terms of biological role, part of the twin-arginine translocation (Tat) system that transports large folded proteins containing a characteristic twin-arginine motif in their signal peptide across membranes. TatA could form the protein-conducting channel of the Tat system. This is Sec-independent protein translocase protein TatA from Sphingopyxis alaskensis (strain DSM 13593 / LMG 18877 / RB2256) (Sphingomonas alaskensis).